Consider the following 468-residue polypeptide: Trehalose-2-sulfate acyltransferase PapA2 (468 aa).

This sequence belongs to the PapA acyltransferase family.

The catalysed reaction is 2-O-sulfo-alpha,alpha-trehalose + hexadecanoyl-CoA = 2-O-sulfo-2'-O-hexadecanoyl-alpha,alpha-trehalose + CoA. In terms of biological role, required for the biosynthesis of sulfolipid-1 (SL-1), a major mycobacterial cell wall lipid. Catalyzes the acylation of trehalose-2-sulfate by adding the palmitoyl group at the 2'-position to yield the intermediate trehalose-2-sulfate-2'-palmitate (SL659). The protein is Trehalose-2-sulfate acyltransferase PapA2 (papA2) of Mycobacterium bovis (strain ATCC BAA-935 / AF2122/97).